The primary structure comprises 2351 residues: Protein FAM186A (2351 aa).

Positions 296 to 340 (EAEKELSLKIIRDLSNENEMLQQKLQDAEEKCEQLIRSKIVIEQL) form a coiled coil. Disordered stretches follow at residues 412–460 (ERTP…SWKR), 470–489 (ETSGPNLSDNKSGQKVSEAK), 505–538 (EMKSFSEDKSKSPTEAKRKHLSLTETKSQGGKSG), 593–667 (QFDD…SEQS), 809–838 (STVQKDHKEKEKQRQEQYLQEGQEQMSGMS), 868–976 (LQMK…RGLE), 1805–1837 (GGQSTSAQFPAPQAPPSPGQLPISRAPPTPGQP), and 1888–1907 (FQPPATAEQSPYLQAPSTPG). Over residues 433 to 446 (DSTKDNVSLKKGDF) the composition is skewed to basic and acidic residues. The span at 472–484 (SGPNLSDNKSGQK) shows a compositional bias: polar residues. A compositionally biased stretch (basic and acidic residues) spans 506–520 (MKSFSEDKSKSPTEA). Positions 527-538 (LTETKSQGGKSG) are enriched in polar residues. Residues 603-612 (GKIKGKKHHI) are compositionally biased toward basic residues. 2 stretches are compositionally biased toward basic and acidic residues: residues 619 to 632 (SKEEKTEEKEELTK) and 812 to 823 (QKDHKEKEKQRQ). Residues 812 to 860 (QKDHKEKEKQRQEQYLQEGQEQMSGMSLKQQLLGERNLLKEHYEKISEN) are a coiled coil. Positions 824 to 838 (EQYLQEGQEQMSGMS) are enriched in polar residues. Composition is skewed to basic and acidic residues over residues 901–912 (AEQEEKQKQRGQ), 939–955 (LEKENGQMRQIQKEAKH), and 964–976 (KGKEKQKPERGLE). Residues 1816–1835 (PQAPPSPGQLPISRAPPTPG) show a composition bias toward pro residues. A compositionally biased stretch (polar residues) spans 1894 to 1907 (AEQSPYLQAPSTPG).

It belongs to the FAM186 family.

This chain is Protein FAM186A (FAM186A), found in Homo sapiens (Human).